A 207-amino-acid chain; its full sequence is MDTLIKEFDVALRAIAGATRTARANPADRLAPDTEQMSADERRHVAGLMRINHVGEVCAQALYQAQKLTARDGAVRAQMDAAAREEEDHLAWCAERLRELGSRPSLLNPLWYAGAFAIGWMAGRAGDRVSLGFVAETERQVEHHLGGHLDRLPEADGRSRAILEQMRDDEIRHGNAARDAGGIPLPAPVRALMRGASRVMTTAAYRI.

Fe cation-binding residues include Glu56, Glu86, His89, Glu138, Glu170, and His173.

It belongs to the COQ7 family. Requires Fe cation as cofactor.

The protein localises to the cell membrane. The enzyme catalyses a 5-methoxy-2-methyl-3-(all-trans-polyprenyl)benzene-1,4-diol + AH2 + O2 = a 3-demethylubiquinol + A + H2O. Its pathway is cofactor biosynthesis; ubiquinone biosynthesis. Functionally, catalyzes the hydroxylation of 2-nonaprenyl-3-methyl-6-methoxy-1,4-benzoquinol during ubiquinone biosynthesis. The polypeptide is 3-demethoxyubiquinol 3-hydroxylase (Cupriavidus necator (strain ATCC 17699 / DSM 428 / KCTC 22496 / NCIMB 10442 / H16 / Stanier 337) (Ralstonia eutropha)).